Here is a 566-residue protein sequence, read N- to C-terminus: Multidrug and toxin extrusion protein 1 (566 aa).

N-acetylmethionine is present on methionine 1. Helical transmembrane passes span 37–57 (LLVL…ISFI), 72–92 (AVTL…HGLS), 120–140 (LILL…EQIL), 152–172 (LTQT…LYTL), 176–196 (YLLN…ANLV), 216–236 (ALAN…YILW), 257–276 (SFLQ…WWAY), 295–315 (SITY…SVAA), 336–356 (AISL…LLGC), 370–390 (IVAL…FEAL), 409–429 (IVNA…LMFV), 437–457 (LWSG…VFIA), and 543–563 (GLLF…RVYI).

Belongs to the multi antimicrobial extrusion (MATE) (TC 2.A.66.1) family. As to expression, highly expressed in kidney and placenta, moderately in stomach, colon, lung, spleen, skeletal muscle and prostate, and slightly in spleen. In the kidney, found in medulla and cortex, especially in the proximal convoluted and straight tubules. No expression was observed in heart, brain, small intestine and liver. Expressed in Sertoli cells in testis.

It localises to the cell membrane. Its subcellular location is the apical cell membrane. It catalyses the reaction thiamine(out) + H(+)(in) = thiamine(in) + H(+)(out). It carries out the reaction estrone 3-sulfate(in) + H(+)(out) = estrone 3-sulfate(out) + H(+)(in). The enzyme catalyses creatinine(in) + H(+)(out) = creatinine(out) + H(+)(in). The catalysed reaction is agmatine(in) + H(+)(out) = agmatine(out) + H(+)(in). Functionally, multidrug efflux pump that functions as a H(+)/organic cation antiporter. Plays a physiological role in the excretion of cationic compounds including endogenous metabolites, drugs, toxins through the kidney and liver, into urine and bile respectively. Mediates the efflux of endogenous compounds such as creatinine, vitamin B1/thiamine, agmatine and estrone-3-sulfate. May also contribute to regulate the transport of cationic compounds in testis across the blood-testis-barrier. The polypeptide is Multidrug and toxin extrusion protein 1 (Slc47a1) (Rattus norvegicus (Rat)).